Consider the following 49-residue polypeptide: MIVYSVFIFAVLAISSVTGIFLPGGGGKKCGGHGEYGSGVIIGAERPKK.

In Caenorhabditis elegans, this protein is Fungus-induced-related protein 16 (fipr-16).